The chain runs to 208 residues: Uridine kinase (208 aa).

11-18 (GGSGSGKT) serves as a coordination point for ATP.

It belongs to the uridine kinase family.

It localises to the cytoplasm. The enzyme catalyses uridine + ATP = UMP + ADP + H(+). The catalysed reaction is cytidine + ATP = CMP + ADP + H(+). It participates in pyrimidine metabolism; CTP biosynthesis via salvage pathway; CTP from cytidine: step 1/3. The protein operates within pyrimidine metabolism; UMP biosynthesis via salvage pathway; UMP from uridine: step 1/1. The sequence is that of Uridine kinase from Staphylococcus carnosus (strain TM300).